A 490-amino-acid polypeptide reads, in one-letter code: Protein nucleotidyltransferase YdiU (490 aa).

Positions 94, 96, 97, 117, 129, 130, 180, and 187 each coordinate ATP. The active-site Proton acceptor is the D256. Mg(2+) is bound by residues N257 and D266. ATP is bound at residue D266.

Belongs to the SELO family. The cofactor is Mg(2+). It depends on Mn(2+) as a cofactor.

It catalyses the reaction L-seryl-[protein] + ATP = 3-O-(5'-adenylyl)-L-seryl-[protein] + diphosphate. It carries out the reaction L-threonyl-[protein] + ATP = 3-O-(5'-adenylyl)-L-threonyl-[protein] + diphosphate. The catalysed reaction is L-tyrosyl-[protein] + ATP = O-(5'-adenylyl)-L-tyrosyl-[protein] + diphosphate. The enzyme catalyses L-histidyl-[protein] + UTP = N(tele)-(5'-uridylyl)-L-histidyl-[protein] + diphosphate. It catalyses the reaction L-seryl-[protein] + UTP = O-(5'-uridylyl)-L-seryl-[protein] + diphosphate. It carries out the reaction L-tyrosyl-[protein] + UTP = O-(5'-uridylyl)-L-tyrosyl-[protein] + diphosphate. Nucleotidyltransferase involved in the post-translational modification of proteins. It can catalyze the addition of adenosine monophosphate (AMP) or uridine monophosphate (UMP) to a protein, resulting in modifications known as AMPylation and UMPylation. This Clostridium perfringens (strain SM101 / Type A) protein is Protein nucleotidyltransferase YdiU.